Reading from the N-terminus, the 1537-residue chain is MWPPQLLILTMLLAPVVHGGKHNERHPALAAPLRHAERSPGGALPPRHLLQQPAAERSTAHRGQGPRGAARGVRGPGAPGAQIAAQAFSRAPIPMAVVRRELSCESYPIELRCPGTDVIMIESANYGRTDDKICDSDPAQMENIRCYLPDAYKIMSQRCNNRTQCAVVAGPDVFPDPCPGTYKYLEVQYECVPYKVEQKVFLCPGLLKGVYQSEHLFESDHQSGAWCKDPLQASDKIYYMPWTPYRTDTLTEYSSKDDFIAGRPTTTYKLPHRVDGTGFVVYDGALFFNKERTRNIVKFDLRTRIKSGEAIIANANYHDTSPYRWGGKSDIDLAVDENGLWVIYATEQNNGKIVISQLNPYTLRIEGTWDTAYDKRSASNAFMICGILYVVKSVYEDDDNEATGNKIDYIYNTDQSKDSLVDVPFPNSYQYIAAVDYNPRDNLLYVWNNYHVVKYSLDFGPLDSRSGPVHHGQVSYISPPIHLDSELERPPVRGISTTGSLGMGSTTTSTTLRTTTWNIGRSTTASLPGRRNRSTSTPSPAVEVLDDVTTHLPSAASQIPAMEESCEAVEAREIMWFKTRQGQVAKQPCPAGTIGVSTYLCLAPDGIWDPQGPDLSNCSSPWVNHITQKLKSGETAANIARELAEQTRNHLNAGDITYSVRAMDQLVGLLDVQLRNLTPGGKDSAARSLNKLQKRERSCRAYVQAMVETVNNLLQPQALNAWRDLTTSDQLRAATMLLDTVEESAFVLADNLLKTDIVRENTDNIQLEVARLSTEGNLEDLKFPENMGHGSTIQLSANTLKQNGRNGEIRVAFVLYNNLGPYLSTENASMKLGTEAMSTNHSVIVNSPVITAAINKEFSNKVYLADPVVFTVKHIKQSEENFNPNCSFWSYSKRTMTGYWSTQGCRLLTTNKTHTTCSCNHLTNFAVLMAHVEVKHSDAVHDLLLDVITWVGILLSLVCLLICIFTFCFFRGLQSDRNTIHKNLCISLFVAELLFLIGINRTDQPIACAVFAALLHFFFLAAFTWMFLEGVQLYIMLVEVFESEHSRRKYFYLVGYGMPALIVAVSAAVDYRSYGTDKVCWLRLDTYFIWSFIGPATLIIMLNVIFLGIALYKMFHHTAILKPESGCLDNINYEDNRPFIKSWVIGAIALLCLLGLTWAFGLMYINESTVIMAYLFTIFNSLQGMFIFIFHCVLQKKVRKEYGKCLRTHCCSGKSTESSIGSGKTSGSRTPGRYSTGSQSRIRRMWNDTVRKQSESSFITGDINSSASLNREGLLNNARDTSVMDTLPLNGNHGNSYSIAGGEYLSNCVQIIDRGYNHNETALEKKILKELTSNYIPSYLNNHERSSEQNRNMMNKLVNNLGSGSEDDAIVLDDAASFNHEESLGLELIHEESDAPLLPPRVYSTDNHQPHHYSRRRFPQDHSESFFPLLTDEHTEDLQSPHRDSLYTSMPALAGVPAADSVTTSTQTEAAAAKGGDAEDVYYKSMPNLGSRNHVHPLHAYYQLGRGSSDGFIVPPNKDGASPEGTSKGPAHLVTSL.

An N-terminal signal peptide occupies residues methionine 1 to glycine 19. Over glycine 20–leucine 943 the chain is Extracellular. The segment at proline 53 to glycine 80 is disordered. The region spanning serine 103–valine 192 is the SUEL-type lectin domain. Cystine bridges form between cysteine 104-cysteine 134, cysteine 113-cysteine 191, cysteine 146-cysteine 178, cysteine 159-cysteine 165, and cysteine 203-cysteine 385. The N-linked (GlcNAc...) asparagine glycan is linked to asparagine 161. One can recognise an Olfactomedin-like domain in the interval leucine 202 to proline 461. The tract at residues tyrosine 317–glutamate 347 is interaction with FLRT3. The Ca(2+) site is built by aspartate 332, asparagine 380, alanine 381, and valine 435. The segment at arginine 521 to proline 540 is disordered. N-linked (GlcNAc...) asparagine glycosylation is found at asparagine 532, asparagine 617, asparagine 827, asparagine 840, asparagine 885, and asparagine 911. The region spanning aspartate 756–lysine 935 is the GAIN-B domain. 2 disulfides stabilise this stretch: cysteine 886–cysteine 917 and cysteine 905–cysteine 919. The tract at residues cysteine 886–lysine 935 is GPS. The segment at threonine 923 to alanine 939 is stachel. Residues leucine 944–phenylalanine 969 traverse the membrane as a helical segment. At phenylalanine 970 to serine 975 the chain is on the cytoplasmic side. Residues aspartate 976–isoleucine 999 form a helical membrane-spanning segment. Residue asparagine 1000 is glycosylated (N-linked (GlcNAc...) asparagine). Over asparagine 1000–isoleucine 1006 the chain is Extracellular. A helical membrane pass occupies residues alanine 1007–tyrosine 1034. Cysteine 1008 and cysteine 1080 are disulfide-bonded. Residues isoleucine 1035–arginine 1048 are Cytoplasmic-facing. Residues lysine 1049–tyrosine 1071 form a helical membrane-spanning segment. The Extracellular portion of the chain corresponds to arginine 1072–threonine 1086. The chain crosses the membrane as a helical span at residues tyrosine 1087–tyrosine 1112. The Cytoplasmic segment spans residues lysine 1113 to serine 1142. Residues tryptophan 1143–methionine 1163 form a helical membrane-spanning segment. Residues tyrosine 1164 to serine 1168 are Extracellular-facing. The N-linked (GlcNAc...) asparagine glycan is linked to asparagine 1166. A helical membrane pass occupies residues threonine 1169–glutamine 1195. At lysine 1196–leucine 1537 the chain is on the cytoplasmic side. The segment at glycine 1213–glycine 1237 is disordered. Residues serine 1254 and serine 1522 each carry the phosphoserine modification. Positions phenylalanine 1512–leucine 1537 are disordered. The PDZ-binding signature appears at histidine 1532–leucine 1537.

This sequence belongs to the G-protein coupled receptor 2 family. LN-TM7 subfamily. As to quaternary structure, heterodimer of 2 chains generated by proteolytic processing; the large extracellular N-terminal fragment and the membrane-bound C-terminal fragment predominantly remain associated and non-covalently linked. Interacts (via olfactomedin-like domain) with FLRT1 (via extracellular domain). Interacts (via olfactomedin-like domain) with FLRT2 (via extracellular domain). Interacts (via olfactomedin-like domain) with FLRT3 (via extracellular domain); the interaction is direct. Interacts (via extracellular domain) with TENM1. Interacts (via extracellular domain) with TENM2. Interacts (via extracellular domain) with TENM3. Identified in a complex with FLRT3 and UNC5B; does not interact with UNC5B by itself. Identified in a complex with FLRT3 and UNC5D; does not interact with UNC5D by itself. In terms of assembly, interacts (via PDZ-binding motif) with SHANK3. Interacts (via PDZ-binding motif) with DLG4. In terms of processing, autoproteolytically processed at the GPS region of the GAIN-B domain; this cleavage modulates receptor activity. Post-translationally, O-glycosylated (major) and N-glycosylated. Localizes to postsynaptic spines in non-overlapping dendritic domains of CA1-region pyramidal neurons: specifically localizes to excitatory synapses in the S.oriens and S.radiatum, corresponding to distinct presynaptic inputs onto CA1-region pyramidal neurons.

It localises to the cell membrane. The protein resides in the postsynaptic cell membrane. The protein localises to the cell projection. It is found in the axon. Its subcellular location is the cell junction. With respect to regulation, forms a heterodimer of 2 chains generated by proteolytic processing that remain associated through non-covalent interactions mediated by the GAIN-B domain. In the inactivated receptor, the Stachel sequence (also named stalk) is embedded in the GAIN-B domain, where it adopts a beta-strand conformation. On activation, the Stachel moves into the 7 transmembrane region and adopts a twisted hook-shaped configuration that forms contacts within the receptor, leading to coupling of a G-alpha protein, which activates signaling. The cleaved GAIN-B and N-terminal domains can then dissociate from the rest of the receptor. Orphan adhesion G-protein coupled receptor (aGPCR), which mediates synapse specificity. Ligand binding causes a conformation change that triggers signaling via guanine nucleotide-binding proteins (G proteins) and modulates the activity of downstream effectors. ADGRL3 is coupled with different classes of G alpha proteins, such as G(12)/G(13), G(s), G(i) or G(q), depending on the context. Coupling to G(12)/G(13) G proteins, which mediates the activation Rho small GTPases is the most efficient. Following G-protein coupled receptor activation, associates with cell adhesion molecules that are expressed at the surface of adjacent cells to direct synapse specificity. Specifically mediates the establishment of Schaffer-collateral synapses formed by CA3-region axons on CA1-region pyramidal neurons in the hippocampus. Localizes to postsynaptic spines in excitatory synapses in the S.oriens and S.radiatum and interacts with presynaptic cell adhesion molecules FLRT3 and TENM2, promoting synapse formation. Plays a role in the development of glutamatergic synapses in the cortex. Important in determining the connectivity rates between the principal neurons in the cortex. In terms of biological role, orphan adhesion G-protein coupled receptor (aGPCR), which mediates synapse specificity. Ligand binding causes a conformation change that triggers signaling via guanine nucleotide-binding proteins (G proteins) and modulates the activity of downstream effectors, such as adenylate cyclase. Isoform 1 is specifically coupled to G(s) G proteins and mediates activation of adenylate cyclase activity. Following G-protein coupled receptor activation, undergoes liquid-liquid phase transition, associates with (1) cell adhesion molecules that are expressed at the surface of adjacent cells, as well as (2) PDZ-containing proteins, such as SHANK3 and DLG4, in the cytoplasm to direct synapse formation. Its function is as follows. Orphan adhesion G-protein coupled receptor (aGPCR). Ligand binding causes a conformation change that triggers signaling via guanine nucleotide-binding proteins (G proteins) and modulates the activity of downstream effectors, such as RhoA pathway. Isoform 7 is coupled to G(12) and/or G(13) G proteins (GNA12 and GNA13, respectively) and mediates the activation Rho small GTPases. This is Adhesion G protein-coupled receptor L3 from Mus musculus (Mouse).